The chain runs to 264 residues: Carbohydrate deacetylase (264 aa).

Catalysis depends on Asp20, which acts as the Proton acceptor. 3 residues coordinate Mg(2+): Asp21, His60, and His127. His215 functions as the Proton donor in the catalytic mechanism.

This sequence belongs to the YdjC deacetylase family. Homodimer. It depends on Mg(2+) as a cofactor.

Probably catalyzes the deacetylation of acetylated carbohydrates an important step in the degradation of oligosaccharides. This is Carbohydrate deacetylase from Thermus thermophilus (strain ATCC 27634 / DSM 579 / HB8).